The chain runs to 288 residues: N-acetylneuraminate lyase (288 aa).

2 residues coordinate aceneuramate: S44 and T45. Y133 (proton donor) is an active-site residue. K161 functions as the Schiff-base intermediate with substrate in the catalytic mechanism. Residues T163, G185, D187, E188, and S204 each coordinate aceneuramate.

It belongs to the DapA family. NanA subfamily. Homotetramer.

It is found in the cytoplasm. The catalysed reaction is aceneuramate = aldehydo-N-acetyl-D-mannosamine + pyruvate. It participates in amino-sugar metabolism; N-acetylneuraminate degradation; D-fructose 6-phosphate from N-acetylneuraminate: step 1/5. Functionally, catalyzes the reversible aldol cleavage of N-acetylneuraminic acid (sialic acid; Neu5Ac) to form pyruvate and N-acetylmannosamine (ManNAc) via a Schiff base intermediate. This Clostridium perfringens (strain ATCC 13124 / DSM 756 / JCM 1290 / NCIMB 6125 / NCTC 8237 / Type A) protein is N-acetylneuraminate lyase.